The following is a 358-amino-acid chain: Gentisate 1,2-dioxygenase (358 aa).

Residues 99-165 enclose the Cupin type-2 domain; it reads QYLGPREVAP…VTDEPMAWLD (67 aa). Residues 185–215 form a disordered region; that stretch reads DELSTRETPERSRGERLWGHPGLRPIGRPDQ. Over residues 187–202 the composition is skewed to basic and acidic residues; sequence LSTRETPERSRGERLW.

This sequence belongs to the gentisate 1,2-dioxygenase family.

It carries out the reaction 2,5-dihydroxybenzoate + O2 = 3-maleylpyruvate + H(+). Functionally, involved in the degradation of salicylate via a pathway involving coenzyme A derivative. Catalyzes the oxygen-dependent ring fission of gentisate between the carboxyl and proximal hydroxyl groups at positions 1 and 2 of the aromatic ring to form maleylpyruvate. The substrate specificity is strong, since salicylate, catechol, protocatechuic acid, homogenetisate, 2,3-dihydroxybenzoate or 5-aminosalicylate cannot substitute for gentisate in the ring cleavage reaction. The protein is Gentisate 1,2-dioxygenase of Streptomyces sp.